Reading from the N-terminus, the 323-residue chain is uncharacterized protein (323 aa).

It is found in the mitochondrion. This is an uncharacterized protein from Schizosaccharomyces pombe (strain 972 / ATCC 24843) (Fission yeast).